We begin with the raw amino-acid sequence, 459 residues long: N(6)-adenosine-methyltransferase non-catalytic subunit METTL14 (459 aa).

The disordered stretch occupies residues Thr50 to Asp73. Interaction with METTL3 stretches follow at residues Arg135–Asp136 and Ser237–Gly238. A positively charged region required for RNA-binding region spans residues Arg245 to Arg254. Interaction with METTL3 stretches follow at residues Arg255 to Asp258 and Lys278 to His287. The segment at Arg297–Arg298 is positively charged region required for RNA-binding. The segment at Asn308–Asp312 is interaction with METTL3. The segment at Ile392–Arg459 is disordered. The segment covering Gly409–Ala423 has biased composition (gly residues). The span at Arg425 to Gly443 shows a compositional bias: basic and acidic residues. A compositionally biased stretch (gly residues) spans Phe444 to Arg453.

It belongs to the MT-A70-like family. As to quaternary structure, heterodimer; heterodimerizes with METTL3 to form an antiparallel heterodimer that constitutes an active methyltransferase. Component of the WMM complex, a N6-methyltransferase complex composed of a catalytic subcomplex, named MAC, and of an associated subcomplex, named MACOM. The MAC subcomplex is composed of METTL3 and METTL14.

The protein resides in the nucleus. Functionally, the METTL3-METTL14 heterodimer forms a N6-methyltransferase complex that methylates adenosine residues at the N(6) position of some mRNAs and regulates the circadian clock, differentiation of embryonic stem cells and cortical neurogenesis. In the heterodimer formed with METTL3, METTL14 constitutes the RNA-binding scaffold that recognizes the substrate rather than the catalytic core. N6-methyladenosine (m6A), which takes place at the 5'-[AG]GAC-3' consensus sites of some mRNAs, plays a role in mRNA stability and processing. This chain is N(6)-adenosine-methyltransferase non-catalytic subunit METTL14 (METTL14), found in Gallus gallus (Chicken).